We begin with the raw amino-acid sequence, 355 residues long: 3-dehydroquinate synthase (355 aa).

NAD(+)-binding positions include 71 to 76, 105 to 109, 129 to 130, Lys142, and Lys151; these read EGEERK, GVVGD, and TS. Residues Glu184, His246, and His263 each contribute to the Zn(2+) site.

Belongs to the sugar phosphate cyclases superfamily. Dehydroquinate synthase family. It depends on Co(2+) as a cofactor. Requires Zn(2+) as cofactor. The cofactor is NAD(+).

Its subcellular location is the cytoplasm. It carries out the reaction 7-phospho-2-dehydro-3-deoxy-D-arabino-heptonate = 3-dehydroquinate + phosphate. It participates in metabolic intermediate biosynthesis; chorismate biosynthesis; chorismate from D-erythrose 4-phosphate and phosphoenolpyruvate: step 2/7. In terms of biological role, catalyzes the conversion of 3-deoxy-D-arabino-heptulosonate 7-phosphate (DAHP) to dehydroquinate (DHQ). The sequence is that of 3-dehydroquinate synthase from Streptococcus pneumoniae (strain ATCC 700669 / Spain 23F-1).